The following is a 302-amino-acid chain: Urease accessory protein UreD 2 (302 aa).

Belongs to the UreD family. As to quaternary structure, ureD, UreF and UreG form a complex that acts as a GTP-hydrolysis-dependent molecular chaperone, activating the urease apoprotein by helping to assemble the nickel containing metallocenter of UreC. The UreE protein probably delivers the nickel.

Its subcellular location is the cytoplasm. Required for maturation of urease via the functional incorporation of the urease nickel metallocenter. The chain is Urease accessory protein UreD 2 from Brucella canis (strain ATCC 23365 / NCTC 10854 / RM-666).